A 440-amino-acid chain; its full sequence is Probable cytosolic iron-sulfur protein assembly protein 1 (440 aa).

7 WD repeats span residues 12–51 (AHAEPAWTVSFNPTRSLLASCSTDRTIRLYSYIIPSSSDG), 71–110 (DHKRTVRSIAWSPDGRTLASGSFDSTVGVWEEVIPLSDDE), 148–187 (GHESECKSVGFSSDGALLASCSRDKSVWVWEVQPDADFEC), 193–233 (EHSQ…WCIF), 278–317 (EEDETVWCLAWSPDGRWLASGGDNGGIRLWQRTGSQPDSA), 326–379 (AHSR…SPSS), and 401–440 (HGVNDINSVAWCVREDKKGWGMLSSAGDDGSVKVWRVVRD). Acidic residues predominate over residues 107 to 116 (SDDEEEEDEG). The tract at residues 107–137 (SDDEEEEDEGAQGVYKPAGVDSDGDGDGGKE) is disordered.

The protein belongs to the WD repeat CIA1 family.

Its function is as follows. Essential component of the cytosolic iron-sulfur (Fe/S) protein assembly machinery. Required for the maturation of extramitochondrial Fe/S proteins. The polypeptide is Probable cytosolic iron-sulfur protein assembly protein 1 (Cryptococcus neoformans var. neoformans serotype D (strain B-3501A) (Filobasidiella neoformans)).